A 1093-amino-acid chain; its full sequence is Protein AF-17 (1093 aa).

Residues 5 to 57 form a PHD-type 1 zinc finger; that stretch reads VGGCCVCSDERGWAENPLVYCDGHACSVAVHQACYGIVQVPTGPWFCRKCESQ. The C2HC pre-PHD-type zinc finger occupies 62–95; the sequence is RVRCELCPHKDGALKRTDNGGWAHVVCALYIPEV. The PHD-type 2 zinc-finger motif lies at 118 to 181; sequence KTCYICEEQG…KYCGYCKYHF (64 aa). Residues 185 to 500 form a disordered region; the sequence is KTSRHSSGGG…GGPAAPSLPS (316 aa). Over residues 191-212 the composition is skewed to gly residues; sequence SGGGGGGAGGGGGSMGGGGSGF. Basic residues predominate over residues 231–255; that stretch reads PTHHERGQKKSRKDKERLKQKHKKR. Ser-258 is modified (phosphoserine). The span at 258-268 shows a compositional bias: pro residues; the sequence is SPPSILTPPVV. The span at 282-300 shows a compositional bias: basic and acidic residues; sequence SHHEASTQETSESSRESKG. Residues 301–316 show a composition bias toward basic residues; the sequence is KKSSSHSLSHKGKKLS. Low complexity predominate over residues 317–340; sequence SGKGVSSFTSASSSSSSSSSSSGG. Residues 345 to 354 show a composition bias toward polar residues; that stretch reads AVSSLQSSPD. Over residues 374–388 the composition is skewed to pro residues; it reads APAPSAPPSPSAPEP. Ser-378 and Ser-423 each carry phosphoserine. Residues 410–425 are compositionally biased toward low complexity; that stretch reads STTTSSSGRARAPSPG. Thr-451 carries the post-translational modification Phosphothreonine. Basic residues predominate over residues 465–484; sequence EKKHKASKRSRHGPGRPKGS. A leucine-zipper region spans residues 729 to 764; the sequence is LQKENQRLQEQILSLTAKKERLQILNVQLSVPFPAL. Disordered stretches follow at residues 775–871 and 1060–1093; these read VPGP…RAPG and QTNPFLSLSGAEGSGGGPKGGTADKGASANQEKG. Low complexity predominate over residues 787-796; that stretch reads SSDSLSTSKS. Residues 804-813 show a composition bias toward polar residues; the sequence is GLDNSLSTSS. Composition is skewed to low complexity over residues 818–832 and 839–853; these read SGCPSRSSSSLSFHS and LLQQSPATLPLALPG.

Interacts with histone H3; interaction is necessary for MLLT6 binding to nucleosomes; interaction is inhibited by histone H3 'Lys-27' methylations (H3K27me1, H3K27me2 and H3K27me3).

The protein resides in the nucleus. The polypeptide is Protein AF-17 (MLLT6) (Homo sapiens (Human)).